Here is a 432-residue protein sequence, read N- to C-terminus: N-acylneuraminate cytidylyltransferase (432 aa).

Positions 39, 49, 98, 107, 109, and 130 each coordinate substrate. Arg-188 is an active-site residue.

The protein belongs to the CMP-NeuNAc synthase family. Homotetramer; the active enzyme is formed by a dimer of dimers. Expressed in testis, ovary and liver.

The protein localises to the nucleus. The catalysed reaction is an N-acylneuraminate + CTP = a CMP-N-acyl-beta-neuraminate + diphosphate. It participates in amino-sugar metabolism; N-acetylneuraminate metabolism. Its function is as follows. Catalyzes the activation of N-acetylneuraminic acid (NeuNAc) to cytidine 5'-monophosphate N-acetylneuraminic acid (CMP-NeuNAc), a substrate required for the addition of sialic acid. In Oncorhynchus mykiss (Rainbow trout), this protein is N-acylneuraminate cytidylyltransferase (cmas).